Here is a 356-residue protein sequence, read N- to C-terminus: Probable cysteine protease RDL6 (356 aa).

An N-terminal signal peptide occupies residues 1–26 (MGFVRPVCMTILFLLIVFVLSAPSSA). A propeptide spans 27–132 (MDLPATSGGH…RRYVPLAGDQ (106 aa)) (activation peptide). N-linked (GlcNAc...) asparagine glycans are attached at residues N37 and N86. 3 disulfide bridges follow: C154–C195, C188–C229, and C288–C339. Residue C157 is part of the active site. Active-site residues include H294 and N314.

The protein belongs to the peptidase C1 family.

Probable thiol protease. This chain is Probable cysteine protease RDL6, found in Arabidopsis thaliana (Mouse-ear cress).